The chain runs to 395 residues: Aspergillopepsin-1 (395 aa).

The N-terminal stretch at M1–A20 is a signal peptide. Positions V21–A70 are cleaved as a propeptide — activation peptide. Residues Y86 to A392 form the Peptidase A1 domain. Active-site residues include D102 and D284. A disulfide bridge connects residues C320 and C355.

This sequence belongs to the peptidase A1 family. As to quaternary structure, monomer.

The protein resides in the secreted. It carries out the reaction Hydrolysis of proteins with broad specificity. Generally favors hydrophobic residues in P1 and P1', but also accepts Lys in P1, which leads to activation of trypsinogen. Does not clot milk.. Functionally, secreted aspartic endopeptidase that allows assimilation of proteinaceous substrates. The scissile peptide bond is attacked by a nucleophilic water molecule activated by two aspartic residues in the active site. Shows a broad primary substrate specificity. Favors hydrophobic residues at the P1 and P1' positions, but also accepts a lysine residue in the P1 position, leading to the activation of trypsinogen and chymotrypsinogen A. The sequence is that of Aspergillopepsin-1 (pepA) from Aspergillus fumigatus (strain CBS 144.89 / FGSC A1163 / CEA10) (Neosartorya fumigata).